The primary structure comprises 668 residues: Small ribosomal subunit protein mS81 (rPPR8) (668 aa).

The transit peptide at 1 to 36 (MRYQQWRLMLLRSYHRSHLPYLSPCSQVTSISSRSF) directs the protein to the mitochondrion. PPR repeat units lie at residues 286 to 320 (DEKT…GYEV), 321 to 355 (EIET…SSSS), 396 to 430 (TDSL…GYVP), 431 to 465 (SGDM…GNNL), 466 to 496 (DDKA…MVGN), 502 to 537 (ADYS…QLKP), and 543 to 577 (KSLV…GFPP).

Belongs to the PPR family. P subfamily. As to quaternary structure, component of the mitochondrial ribosome small subunit.

The protein resides in the mitochondrion. The chain is Small ribosomal subunit protein mS81 (rPPR8) from Arabidopsis thaliana (Mouse-ear cress).